The chain runs to 199 residues: Type II secretion system protein J (199 aa).

Positions 1 to 7 are cleaved as a propeptide — leader sequence; sequence MKRTRAG. N-methylphenylalanine is present on Phe-8. Residues 8–27 traverse the membrane as a helical segment; the sequence is FTLLEMLVAIAIFASLALMA.

The protein belongs to the GSP J family. In terms of assembly, type II secretion is composed of four main components: the outer membrane complex, the inner membrane complex, the cytoplasmic secretion ATPase and the periplasm-spanning pseudopilus. Interacts with core component GspG. Interacts with pseudopilins GspI and GspK. In terms of processing, cleaved by prepilin peptidase. Post-translationally, methylated by prepilin peptidase at the amino group of the N-terminal phenylalanine once the leader sequence is cleaved by prepilin peptidase.

It localises to the cell inner membrane. Functionally, component of the type II secretion system required for the energy-dependent secretion of extracellular factors such as proteases and toxins from the periplasm. Part of the pseudopilus tip complex that is critical for the recognition and binding of secretion substrates. The polypeptide is Type II secretion system protein J (gspJ) (Escherichia coli).